Consider the following 285-residue polypeptide: Phosphatidylserine decarboxylase proenzyme (285 aa).

Catalysis depends on charge relay system; for autoendoproteolytic cleavage activity residues aspartate 89, histidine 146, and serine 252. The active-site Schiff-base intermediate with substrate; via pyruvic acid; for decarboxylase activity is serine 252. Serine 252 is subject to Pyruvic acid (Ser); by autocatalysis.

This sequence belongs to the phosphatidylserine decarboxylase family. PSD-B subfamily. Prokaryotic type I sub-subfamily. In terms of assembly, heterodimer of a large membrane-associated beta subunit and a small pyruvoyl-containing alpha subunit. Pyruvate serves as cofactor. Post-translationally, is synthesized initially as an inactive proenzyme. Formation of the active enzyme involves a self-maturation process in which the active site pyruvoyl group is generated from an internal serine residue via an autocatalytic post-translational modification. Two non-identical subunits are generated from the proenzyme in this reaction, and the pyruvate is formed at the N-terminus of the alpha chain, which is derived from the carboxyl end of the proenzyme. The autoendoproteolytic cleavage occurs by a canonical serine protease mechanism, in which the side chain hydroxyl group of the serine supplies its oxygen atom to form the C-terminus of the beta chain, while the remainder of the serine residue undergoes an oxidative deamination to produce ammonia and the pyruvoyl prosthetic group on the alpha chain. During this reaction, the Ser that is part of the protease active site of the proenzyme becomes the pyruvoyl prosthetic group, which constitutes an essential element of the active site of the mature decarboxylase.

It localises to the cell membrane. The enzyme catalyses a 1,2-diacyl-sn-glycero-3-phospho-L-serine + H(+) = a 1,2-diacyl-sn-glycero-3-phosphoethanolamine + CO2. It participates in phospholipid metabolism; phosphatidylethanolamine biosynthesis; phosphatidylethanolamine from CDP-diacylglycerol: step 2/2. Catalyzes the formation of phosphatidylethanolamine (PtdEtn) from phosphatidylserine (PtdSer). The polypeptide is Phosphatidylserine decarboxylase proenzyme (Vibrio campbellii (strain ATCC BAA-1116)).